The sequence spans 125 residues: Protein JAZ13 (125 aa).

The short motif at 6–10 (LDLHL) is the EAR element. Positions 99 to 125 (KKRSKSFTLTPNYTSSTSSSSSSLHNF) are disordered. Residues 112–125 (TSSTSSSSSSLHNF) show a composition bias toward low complexity.

In terms of assembly, monomer. Lack of homodimerization, and very weak or no interaction with AFPH2/NINJA and other JAZ proteins. Interacts (via EAR motif) with TPL. Interacts (via jas motif) with MYC2. Phosphorylated at multiple serine residues.

In terms of biological role, non-TIFY functional repressor of jasmonate (JA)-mediated growth and defense responses. Intrinsically resistant to JA-induced turnover, probably due to the absence of the canonical degron that strongly interacts with COI1 in the presence of JA-Ile in the TIFY/JAZ proteins. This chain is Protein JAZ13, found in Arabidopsis thaliana (Mouse-ear cress).